The primary structure comprises 1209 residues: Nitric oxide synthase (1209 aa).

Ser-103 contacts (6R)-L-erythro-5,6,7,8-tetrahydrobiopterin. Residue Cys-181 participates in heme b binding. 5 residues coordinate L-arginine: Gln-244, Trp-353, Tyr-354, Glu-358, and Asn-363. Positions 444 and 457 each coordinate (6R)-L-erythro-5,6,7,8-tetrahydrobiopterin. Residue Tyr-472 participates in heme b binding. Residues 491–511 form a calmodulin-binding region; it reads VHRKFHFKQIARAVKFTSKLF. The Flavodoxin-like domain occupies 521-723; the sequence is ATILYATETG…QFRAWSSKIF (203 aa). 527–531 contacts FMN; the sequence is TETGK. The segment at 603–622 is disordered; sequence RGDGTSDLGSGTFKTPTPKS. 669–700 is a binding site for FMN; that stretch reads VFGLGSSAYPKFCHFGKTVDKILGDLGGERIL. One can recognise an FAD-binding FR-type domain in the interval 776–1021; the sequence is KQLITCKVKE…IRRAPSFHMP (246 aa). Residues 811–822 and 954–964 each bind FAD; these read YDPGDHVGVLAC and LQPRFYSISSS. Residues 1028-1147 and 1128-1143 each bind NADP(+); these read LILV…QQKL and NGHF…AEEV.

The protein belongs to the NOS family. Requires heme b as cofactor. The cofactor is FAD. FMN is required as a cofactor. As to expression, constitutively expressed at a low level in the larval fat body, hemocyte, Malpighian tubule, midgut, silk gland and adult antenna.

The catalysed reaction is 2 L-arginine + 3 NADPH + 4 O2 + H(+) = 2 L-citrulline + 2 nitric oxide + 3 NADP(+) + 4 H2O. Its activity is regulated as follows. Expression is dependent on and stimulated by NADPH, calcium, BH4 and calmodulin. The activity is not dependent on FAD and is not stimulated by its presence. Produces nitric oxide (NO) which is a messenger molecule with diverse functions throughout the body. Involved in the induction of immune gene expression. The chain is Nitric oxide synthase from Bombyx mori (Silk moth).